We begin with the raw amino-acid sequence, 291 residues long: N-acetylmannosamine kinase (291 aa).

Residues 5–12 (AIDIGGTK) and 132–139 (GVGGGVVS) each bind ATP. Zn(2+)-binding residues include His-156, Cys-166, Cys-168, and Cys-173.

Belongs to the ROK (NagC/XylR) family. NanK subfamily. In terms of assembly, homodimer.

The enzyme catalyses an N-acyl-D-mannosamine + ATP = an N-acyl-D-mannosamine 6-phosphate + ADP + H(+). Its pathway is amino-sugar metabolism; N-acetylneuraminate degradation; D-fructose 6-phosphate from N-acetylneuraminate: step 2/5. Catalyzes the phosphorylation of N-acetylmannosamine (ManNAc) to ManNAc-6-P. The protein is N-acetylmannosamine kinase of Escherichia coli O157:H7.